The sequence spans 270 residues: tRNA pseudouridine synthase A (270 aa).

Asp-52 functions as the Nucleophile in the catalytic mechanism. Tyr-110 serves as a coordination point for substrate.

The protein belongs to the tRNA pseudouridine synthase TruA family. As to quaternary structure, homodimer.

It catalyses the reaction uridine(38/39/40) in tRNA = pseudouridine(38/39/40) in tRNA. In terms of biological role, formation of pseudouridine at positions 38, 39 and 40 in the anticodon stem and loop of transfer RNAs. This Roseiflexus castenholzii (strain DSM 13941 / HLO8) protein is tRNA pseudouridine synthase A.